A 432-amino-acid chain; its full sequence is ATP-dependent RNA helicase RhlB (432 aa).

A Q motif motif is present at residues 9 to 37 (QNFADLGLQPQVIDGLNAKGFIKCTPIQA). The Helicase ATP-binding domain occupies 40–219 (LPVLLAGQDI…FEHMQEPEHV (180 aa)). 53 to 60 (AQTGTGKT) is a binding site for ATP. The DEAD box motif lies at 165-168 (DEAD). Residues 245-390 (ALLQTLIEEE…QSDYDASALL (146 aa)) form the Helicase C-terminal domain. Positions 396-432 (PLRLQRRPQQNRRNNNGQRQGGNRKHTRPRQPRNTQS) are disordered. Basic residues predominate over residues 417–426 (GNRKHTRPRQ).

It belongs to the DEAD box helicase family. RhlB subfamily. As to quaternary structure, component of the RNA degradosome, which is a multiprotein complex involved in RNA processing and mRNA degradation.

The protein resides in the cytoplasm. The enzyme catalyses ATP + H2O = ADP + phosphate + H(+). Its function is as follows. DEAD-box RNA helicase involved in RNA degradation. Has RNA-dependent ATPase activity and unwinds double-stranded RNA. The chain is ATP-dependent RNA helicase RhlB from Aliivibrio fischeri (strain ATCC 700601 / ES114) (Vibrio fischeri).